Reading from the N-terminus, the 313-residue chain is MNEYIGQGNIKKRLGLAIKASKIRKEALDHVLLVGPPGLGKTTLAHIISNELGTNIHVTSGPILEKQGDVAAILTNLEHGDVLFIDEIHRMNRSVEEILYTAMEDFQIDILIGKGPSARSIRIDLQPFTLVGATTRSGLLSAPLRNRFGLIMELDFYSIDELSKIIERAAIVLNVEIEKDAAILLAKRSRGTPRIALRLLRRVRDMSTIRGKVKIDIYMVEEIMFLLGIDKEGLDELDRKILRTIIEVYNGGPVGVKSLAASVGISEDSISEVYEPYLLQSGFIARTHRGRIATKKAYNHLGIKVQRGLFDEE.

A large ATPase domain (RuvB-L) region spans residues 1 to 157 (MNEYIGQGNI…FGLIMELDFY (157 aa)). ATP contacts are provided by residues Gly-38, Lys-41, Thr-42, Thr-43, 104-106 (EDF), Arg-147, Tyr-157, and Arg-194. Thr-42 lines the Mg(2+) pocket. A small ATPAse domain (RuvB-S) region spans residues 158–228 (SIDELSKIIE…MVEEIMFLLG (71 aa)). Positions 231–313 (KEGLDELDRK…KVQRGLFDEE (83 aa)) are head domain (RuvB-H). DNA-binding residues include Arg-286 and Arg-291.

Belongs to the RuvB family. In terms of assembly, homohexamer. Forms an RuvA(8)-RuvB(12)-Holliday junction (HJ) complex. HJ DNA is sandwiched between 2 RuvA tetramers; dsDNA enters through RuvA and exits via RuvB. An RuvB hexamer assembles on each DNA strand where it exits the tetramer. Each RuvB hexamer is contacted by two RuvA subunits (via domain III) on 2 adjacent RuvB subunits; this complex drives branch migration. In the full resolvosome a probable DNA-RuvA(4)-RuvB(12)-RuvC(2) complex forms which resolves the HJ.

Its subcellular location is the cytoplasm. It catalyses the reaction ATP + H2O = ADP + phosphate + H(+). The RuvA-RuvB-RuvC complex processes Holliday junction (HJ) DNA during genetic recombination and DNA repair, while the RuvA-RuvB complex plays an important role in the rescue of blocked DNA replication forks via replication fork reversal (RFR). RuvA specifically binds to HJ cruciform DNA, conferring on it an open structure. The RuvB hexamer acts as an ATP-dependent pump, pulling dsDNA into and through the RuvAB complex. RuvB forms 2 homohexamers on either side of HJ DNA bound by 1 or 2 RuvA tetramers; 4 subunits per hexamer contact DNA at a time. Coordinated motions by a converter formed by DNA-disengaged RuvB subunits stimulates ATP hydrolysis and nucleotide exchange. Immobilization of the converter enables RuvB to convert the ATP-contained energy into a lever motion, pulling 2 nucleotides of DNA out of the RuvA tetramer per ATP hydrolyzed, thus driving DNA branch migration. The RuvB motors rotate together with the DNA substrate, which together with the progressing nucleotide cycle form the mechanistic basis for DNA recombination by continuous HJ branch migration. Branch migration allows RuvC to scan DNA until it finds its consensus sequence, where it cleaves and resolves cruciform DNA. In Thermosipho melanesiensis (strain DSM 12029 / CIP 104789 / BI429), this protein is Holliday junction branch migration complex subunit RuvB.